The chain runs to 100 residues: Integration host factor subunit alpha (100 aa).

The tract at residues 53–72 is disordered; it reads FQLRDKPQRPGRNPKTGEEV.

The protein belongs to the bacterial histone-like protein family. As to quaternary structure, heterodimer of an alpha and a beta chain.

This protein is one of the two subunits of integration host factor, a specific DNA-binding protein that functions in genetic recombination as well as in transcriptional and translational control. The sequence is that of Integration host factor subunit alpha from Neisseria gonorrhoeae (strain ATCC 700825 / FA 1090).